A 117-amino-acid polypeptide reads, in one-letter code: Anti-sigma F factor antagonist (117 aa).

The region spanning 3–113 is the STAS domain; sequence LGIDMNVKES…QSEQQALLTL (111 aa). Residue serine 58 is modified to Phosphoserine.

It belongs to the anti-sigma-factor antagonist family. Phosphorylated by SpoIIAB on a serine residue.

In terms of biological role, in the phosphorylated form it could act as an anti-anti-sigma factor that counteracts SpoIIAB and thus releases sigma f from inhibition. This is Anti-sigma F factor antagonist (spoIIAA) from Bacillus subtilis (strain 168).